The following is a 248-amino-acid chain: Ureidoacrylate amidohydrolase RutB (248 aa).

Asp-41 functions as the Proton acceptor in the catalytic mechanism. The active site involves Lys-150. The active-site Nucleophile is the Cys-183.

The protein belongs to the isochorismatase family. RutB subfamily.

It catalyses the reaction (Z)-3-ureidoacrylate + H2O + H(+) = (Z)-3-aminoacrylate + NH4(+) + CO2. The enzyme catalyses (Z)-3-ureidoacrylate + H2O = (Z)-3-aminoacrylate + carbamate + H(+). The catalysed reaction is (Z)-2-methylureidoacrylate + H2O + H(+) = (Z)-2-methylaminoacrylate + NH4(+) + CO2. Functionally, hydrolyzes ureidoacrylate to form aminoacrylate and carbamate. The carbamate hydrolyzes spontaneously, thereby releasing one of the nitrogen atoms of the pyrimidine ring as ammonia and one of its carbon atoms as CO2. This chain is Ureidoacrylate amidohydrolase RutB, found in Stutzerimonas stutzeri (strain A1501) (Pseudomonas stutzeri).